Here is a 743-residue protein sequence, read N- to C-terminus: Glycerol dehydrogenase large subunit (743 aa).

An N-terminal signal peptide occupies residues 1-24; it reads MRRSHLLATVACATLACAPLAANA. A compositionally biased stretch (low complexity) spans 27-41; the sequence is APAGSGGSPTSSVPG. Disordered stretches follow at residues 27-115 and 445-474; these read APAG…GHDD and ILPV…STGM.

This sequence belongs to the bacterial PQQ dehydrogenase family. It depends on pyrroloquinoline quinone as a cofactor.

The protein localises to the secreted. The enzyme catalyses glycerol + A = dihydroxyacetone + AH2. Catalyzes the oxidation of glycerol to glycerone. Also acts, more slowly, on a number of other polyols including D-sorbitol, D-arabinitol, D-mannitol, meso-erythritol, adonitol and propylene glycol. The chain is Glycerol dehydrogenase large subunit (sldA) from Gluconobacter oxydans (strain 621H) (Gluconobacter suboxydans).